A 538-amino-acid polypeptide reads, in one-letter code: Lipid scramblase CLPTM1L (538 aa).

Residues 1–9 (MFPKTSFTS) are Cytoplasmic-facing. The chain crosses the membrane as a helical span at residues 10–30 (LIVGVFLLYVLHTCWVMYGIV). At 31–284 (YTKPCEKRRA…IKGIFVDTNL (254 aa)) the chain is on the extracellular side. Residues Asn-90 and Asn-100 are each glycosylated (N-linked (GlcNAc...) asparagine). Positions 140-166 (ISLITGQDEPEKPDQQKQSSDSELDRP) are disordered. N-linked (GlcNAc...) asparagine glycosylation occurs at Asn-229. The chain crosses the membrane as a helical span at residues 285-305 (YFLALTFFVAAFHLLFDFLAF). The Cytoplasmic portion of the chain corresponds to 306 to 324 (KNDISFWKHKKSMVGMSSK). A helical transmembrane segment spans residues 325–341 (AVLWRCFSTIVIFLYLL). Residues 342–402 (DEQTSLLVLV…TEEYDTLAMK (61 aa)) lie on the Extracellular side of the membrane. Residues 403–423 (YLSYLLYPLCVGGAVYALVFV) traverse the membrane as a helical segment. Residues 424–428 (KYKSW) lie on the Cytoplasmic side of the membrane. The helical transmembrane segment at 429-449 (YSWIINSLVNGVYAFGFLFML) threads the bilayer. Topologically, residues 450–538 (PQLFVNYKLK…EKPKGKSHED (89 aa)) are extracellular.

The protein belongs to the CLPTM1 family.

It localises to the endoplasmic reticulum membrane. It carries out the reaction a 6-(alpha-D-glucosaminyl)-1-(1,2-diacyl-sn-glycero-3-phospho)-1D-myo-inositol(in) = a 6-(alpha-D-glucosaminyl)-1-(1,2-diacyl-sn-glycero-3-phospho)-1D-myo-inositol(out). It catalyses the reaction 6-(alpha-D-glucosaminyl)-(1-octadecanoyl,2-(9Z)-octadecenoyl-sn-glycero-3-phospho)-1D-myo-inositol(in) = 6-(alpha-D-glucosaminyl)-(1-octadecanoyl,2-(9Z)-octadecenoyl-sn-glycero-3-phospho)-1D-myo-inositol(out). The catalysed reaction is a 1,2-diacyl-sn-glycero-3-phospho-(1D-myo-inositol)(in) = a 1,2-diacyl-sn-glycero-3-phospho-(1D-myo-inositol)(out). The enzyme catalyses a 1,2-diacyl-sn-glycero-3-phosphocholine(in) = a 1,2-diacyl-sn-glycero-3-phosphocholine(out). It carries out the reaction a 1,2-diacyl-sn-glycero-3-phosphoethanolamine(in) = a 1,2-diacyl-sn-glycero-3-phosphoethanolamine(out). Its function is as follows. Scramblase that mediates the translocation of glucosaminylphosphatidylinositol (alpha-D-GlcN-(1-6)-(1,2-diacyl-sn-glycero-3-phospho)-1D-myo-inositol, GlcN-PI) across the endoplasmic reticulum (ER) membrane, from the cytosolic leaflet to the luminal leaflet of the ER membrane, where it participates in the biosynthesis of glycosylphosphatidylinositol (GPI). GPI is a lipid glycoconjugate involved in post-translational modification of proteins. Can also translocate 1,2-diacyl-sn-glycero-3-phospho-(1D-myo-inositol) (phosphatidylinositol or PI), as well as several other phospholipids (1,2-diacyl-sn-glycero-3-phosphocholine, 1,2-diacyl-sn-glycero-3-phosphoethanolamine), and N-acetylglucosaminylphosphatidylinositol (GlcNAc-PI) in vitro. This is Lipid scramblase CLPTM1L (clptm1l) from Danio rerio (Zebrafish).